We begin with the raw amino-acid sequence, 459 residues long: MNRLPSSASALACSAHALNLIEKRTLNHEEMKALNREVIDYFKEHVNPGFLEYRKSVTAGGDYGAVEWQAGSLNTLVDTQGQEFIDCLGGFGIFNVGHRNPVVVSAVQNQLAKQPLHSQELLDPLRAMLAKTLAALTPGKLKYSFFCNSGTESVEAALKLAKAYQSPRGKFTFIATSGAFHGKSLGALSATAKSTFRRPFMPLLPGFRHVPFGNIDAMSMAFSEGKKTGDEIAAVILEPIQGEGGVILPPQGYLTEVRKLCDEFGALMILDEVQTGMGRTGKMFACEHENVQPDILCLAKALGGGVMPIGATIATEEVFSVLFDNPFLHTTTFGGNPLACAAALATINVLLEQNLPAQAEQKGDTLLDGFRQLAREYPNLVHDARGKGMLMAIEFVDNETGYRFASEMFRQRVLVAGTLNNAKTIRIEPPLTLTIELCEQVLKSARNALAAMQVSVEEV.

Pyridoxal 5'-phosphate-binding positions include 150–151 (GT) and glutamine 274. Lysine 300 carries the N6-(pyridoxal phosphate)lysine modification. Threonine 332 provides a ligand contact to pyridoxal 5'-phosphate.

The protein belongs to the class-III pyridoxal-phosphate-dependent aminotransferase family. Putrescine aminotransferase subfamily. It depends on pyridoxal 5'-phosphate as a cofactor.

It catalyses the reaction an alkane-alpha,omega-diamine + 2-oxoglutarate = an omega-aminoaldehyde + L-glutamate. The catalysed reaction is putrescine + 2-oxoglutarate = 1-pyrroline + L-glutamate + H2O. It carries out the reaction cadaverine + 2-oxoglutarate = 5-aminopentanal + L-glutamate. The protein operates within amine and polyamine degradation; putrescine degradation; 4-aminobutanal from putrescine (transaminase route): step 1/1. In terms of biological role, catalyzes the aminotransferase reaction from putrescine to 2-oxoglutarate, leading to glutamate and 4-aminobutanal, which spontaneously cyclizes to form 1-pyrroline. This is the first step in one of two pathways for putrescine degradation, where putrescine is converted into 4-aminobutanoate (gamma-aminobutyrate or GABA) via 4-aminobutanal. Also functions as a cadaverine transaminase in a a L-lysine degradation pathway to succinate that proceeds via cadaverine, glutarate and L-2-hydroxyglutarate. The protein is Putrescine aminotransferase of Salmonella agona (strain SL483).